A 279-amino-acid polypeptide reads, in one-letter code: Large ribosomal subunit protein uL2 (279 aa).

The segment at 223 to 279 is disordered; that stretch reads TVRGSAMNPNDHPHGGGEGRSPVGMDAPRTPWGKRHMGVKTRNNKKSSTSMIVRRRK. Basic residues predominate over residues 254 to 267; sequence WGKRHMGVKTRNNK.

This sequence belongs to the universal ribosomal protein uL2 family. In terms of assembly, part of the 50S ribosomal subunit. Forms a bridge to the 30S subunit in the 70S ribosome.

One of the primary rRNA binding proteins. Required for association of the 30S and 50S subunits to form the 70S ribosome, for tRNA binding and peptide bond formation. It has been suggested to have peptidyltransferase activity; this is somewhat controversial. Makes several contacts with the 16S rRNA in the 70S ribosome. In Ureaplasma parvum serovar 3 (strain ATCC 27815 / 27 / NCTC 11736), this protein is Large ribosomal subunit protein uL2.